A 558-amino-acid polypeptide reads, in one-letter code: Dihydroxy-acid dehydratase (558 aa).

Asp78 contacts Mg(2+). Cys119 is a binding site for [2Fe-2S] cluster. Asp120 and Lys121 together coordinate Mg(2+). The residue at position 121 (Lys121) is an N6-carboxylysine. Cys192 lines the [2Fe-2S] cluster pocket. Glu445 lines the Mg(2+) pocket. Catalysis depends on Ser471, which acts as the Proton acceptor.

This sequence belongs to the IlvD/Edd family. In terms of assembly, homodimer. [2Fe-2S] cluster serves as cofactor. Requires Mg(2+) as cofactor.

It carries out the reaction (2R)-2,3-dihydroxy-3-methylbutanoate = 3-methyl-2-oxobutanoate + H2O. The catalysed reaction is (2R,3R)-2,3-dihydroxy-3-methylpentanoate = (S)-3-methyl-2-oxopentanoate + H2O. It functions in the pathway amino-acid biosynthesis; L-isoleucine biosynthesis; L-isoleucine from 2-oxobutanoate: step 3/4. The protein operates within amino-acid biosynthesis; L-valine biosynthesis; L-valine from pyruvate: step 3/4. Functionally, functions in the biosynthesis of branched-chain amino acids. Catalyzes the dehydration of (2R,3R)-2,3-dihydroxy-3-methylpentanoate (2,3-dihydroxy-3-methylvalerate) into 2-oxo-3-methylpentanoate (2-oxo-3-methylvalerate) and of (2R)-2,3-dihydroxy-3-methylbutanoate (2,3-dihydroxyisovalerate) into 2-oxo-3-methylbutanoate (2-oxoisovalerate), the penultimate precursor to L-isoleucine and L-valine, respectively. The chain is Dihydroxy-acid dehydratase from Akkermansia muciniphila (strain ATCC BAA-835 / DSM 22959 / JCM 33894 / BCRC 81048 / CCUG 64013 / CIP 107961 / Muc).